Consider the following 1521-residue polypeptide: Protein OPAQUE1 (1521 aa).

The region spanning 4 to 53 (RKGLKVWVEEKGEGWVEAEVVEAKERAVVVFSSQRKKITVSPEKLLPRDT) is the Myosin N-terminal SH3-like domain. In terms of domain architecture, Myosin motor spans 60-731 (GHVDDMTKLT…QIAILDMRRA (672 aa)). Residues 155-162 (GESGAGKT) and 208-216 (NDNSSRFGK) each bind ATP. Actin-binding stretches follow at residues 493–527 (LIEK…FRNF), 529–552 (SHLR…AGKV), 587–612 (FTSL…KLQL), and 612–634 (LQAL…KPNS). 6 IQ domains span residues 733-755 (ILDN…KEFV), 756-778 (KTRE…KMFA), 781-803 (RETA…RAHL), 804-826 (QACL…RYFS), 829-851 (REHK…ILFQ), and 852-874 (NYRQ…KELR). Coiled coils occupy residues 870–910 (RKEL…ERRL) and 974–1050 (SAEA…LRQK). The Dilute domain maps to 1162–1459 (DHVIEAINDV…VAAMREMVNK (298 aa)).

The protein belongs to the TRAFAC class myosin-kinesin ATPase superfamily. Myosin family. Plant myosin class XI subfamily. In terms of assembly, interacts (via C-terminus) with HIP (via C-terminus), but not with zeins, FL1 or intrinsic proteins of protein bodies. High expression in kernels and stems, intermediate in ears and leaves, and low in roots, silks and tassels.

The protein resides in the cytoplasm. Functionally, myosin XI motor protein required for endoplasmic reticulum motility and protein body formation. May function by binding with its tail domain to receptor proteins on membranes and exerting force with its N-terminal motor domain against actin filaments, thereby transporting its cargo along polarized actin cables. The protein is Protein OPAQUE1 of Zea mays (Maize).